The chain runs to 624 residues: Kelch-like protein diablo (624 aa).

Residues 1–55 (MGDPLLPGSTGLGSGSATAATGGSVTAGSGLGNGGTGGAERPPSPARLTHTSEKH) form a disordered region. A compositionally biased stretch (low complexity) spans 15 to 28 (GSATAATGGSVTAG). The segment covering 29-38 (SGLGNGGTGG) has biased composition (gly residues). The BTB domain maps to 73–140 (CDVVLNVGGR…CYTAHIIVEE (68 aa)). The BACK domain occupies 175 to 277 (CLGIRAFADT…SPKFLVGTVG (103 aa)). Kelch repeat units follow at residues 324–370 (VLFA…VLND), 372–418 (LYAV…VLDG), 419–465 (FLYA…VLSG), 467–512 (LYAI…VFNN), 514–559 (IYAV…VVNG), and 560–606 (QLYA…VMRA).

It participates in protein modification; protein ubiquitination. Probable substrate-specific adapter of an E3 ubiquitin-protein ligase complex which mediates the ubiquitination and subsequent proteasomal degradation of target proteins. May have a role in synapse differentiation and growth. The chain is Kelch-like protein diablo from Drosophila grimshawi (Hawaiian fruit fly).